Here is a 148-residue protein sequence, read N- to C-terminus: Transcription antitermination protein NusB (148 aa).

The protein belongs to the NusB family.

Functionally, involved in transcription antitermination. Required for transcription of ribosomal RNA (rRNA) genes. Binds specifically to the boxA antiterminator sequence of the ribosomal RNA (rrn) operons. In Novosphingobium aromaticivorans (strain ATCC 700278 / DSM 12444 / CCUG 56034 / CIP 105152 / NBRC 16084 / F199), this protein is Transcription antitermination protein NusB.